Reading from the N-terminus, the 261-residue chain is Putative outer membrane protein CT_371 (261 aa).

The first 18 residues, methionine 1–alanine 18, serve as a signal peptide directing secretion.

The protein localises to the cell outer membrane. In Chlamydia trachomatis serovar D (strain ATCC VR-885 / DSM 19411 / UW-3/Cx), this protein is Putative outer membrane protein CT_371.